Consider the following 527-residue polypeptide: UPF0053 protein YegH (527 aa).

7 consecutive transmembrane segments (helical) span residues 14 to 34 (ITLIVIELVLGIDNLVFIAIL), 51 to 71 (LLLAMLMRLLLLASISWLVTL), 81 to 101 (FTFSARDLIMLFGGFFLLFKA), 122 to 142 (GAKFWGVVTQIVVLDAIFSLD), 145 to 165 (ITAVGMVDHLLVMMAAVVIAI), 185 to 205 (IVILCLSFLLMIGFSLVAEGF), and 207 to 227 (FVIPKGYLYAAIGFSVMIEAL). 2 CBS domains span residues 306–366 (MTSR…GEPL) and 371–429 (LIRQ…PNEV).

It belongs to the UPF0053 family.

The protein resides in the cell membrane. The protein is UPF0053 protein YegH (yegH) of Shigella flexneri.